The sequence spans 1342 residues: DNA-directed RNA polymerase subunit beta (1342 aa).

The protein belongs to the RNA polymerase beta chain family. In terms of assembly, the RNAP catalytic core consists of 2 alpha, 1 beta, 1 beta' and 1 omega subunit. When a sigma factor is associated with the core the holoenzyme is formed, which can initiate transcription.

The enzyme catalyses RNA(n) + a ribonucleoside 5'-triphosphate = RNA(n+1) + diphosphate. DNA-dependent RNA polymerase catalyzes the transcription of DNA into RNA using the four ribonucleoside triphosphates as substrates. This is DNA-directed RNA polymerase subunit beta from Vibrio campbellii (strain ATCC BAA-1116).